Reading from the N-terminus, the 191-residue chain is Protein YceI (191 aa).

A signal peptide spans 1–22; sequence MKKNLLGFTLASLLFTTGSAVA.

This sequence belongs to the UPF0312 family. Type 1 subfamily.

The protein resides in the periplasm. This is Protein YceI from Salmonella dublin (strain CT_02021853).